Here is a 318-residue protein sequence, read N- to C-terminus: L-lactate dehydrogenase (318 aa).

NAD(+) contacts are provided by residues Val18, Asp39, Lys44, Tyr69, and 83 to 84 (GA). Residues Gln86 and Arg92 each contribute to the substrate site. Residues Ser105, 122–124 (VSN), and Ser147 each bind NAD(+). A substrate-binding site is contributed by 124–127 (NPVD). Residue 152–155 (DTSR) coordinates substrate. His179 acts as the Proton acceptor in catalysis. Tyr225 carries the post-translational modification Phosphotyrosine. Residue Thr234 participates in substrate binding.

Belongs to the LDH/MDH superfamily. LDH family. In terms of assembly, homotetramer.

The protein localises to the cytoplasm. It catalyses the reaction (S)-lactate + NAD(+) = pyruvate + NADH + H(+). The protein operates within fermentation; pyruvate fermentation to lactate; (S)-lactate from pyruvate: step 1/1. In terms of biological role, catalyzes the conversion of lactate to pyruvate. In Clostridium botulinum (strain Loch Maree / Type A3), this protein is L-lactate dehydrogenase.